We begin with the raw amino-acid sequence, 498 residues long: ADP,ATP carrier protein 1 (498 aa).

At 1–33 (MSTSKSENYLSELRKIIWPIEQHENKKFLPLAF) the chain is on the cytoplasmic side. The chain crosses the membrane as a helical span at residues 34–54 (MMFCILLNYSTLRSIKDGFVV). An intrachain disulfide couples cysteine 37 to cysteine 85. The Extracellular portion of the chain corresponds to 55–67 (TDIGTESISFLKT). A helical membrane pass occupies residues 68-88 (YIVLPSAVIAMVIYVKLCDIL). Residues 89 to 92 (KQEN) are Cytoplasmic-facing. Residues 93–113 (IFYVITSFFLGYFALFAFVLY) form a helical membrane-spanning segment. Over 114–147 (PYPDLVHPDHKTIESLSLAYPNFKWFIKIVGKWS) the chain is Extracellular. Residues 148–168 (FASFYTIAELWGTMMLSLLFW) form a helical membrane-spanning segment. The Cytoplasmic segment spans residues 169 to 184 (QFANQITKITEAKRFY). A helical membrane pass occupies residues 185–205 (SMFGLLANLALPVTSVVIGYF). At 206–218 (LHEKTQIVSEHLK) the chain is on the extracellular side. Residues 219-239 (FIPLFVIMITSSFLIILTYRW) form a helical membrane-spanning segment. Topologically, residues 240–279 (MNKNVLTDPRLYDPTLVKEKKAKAKLSFIESFKMIFTSKY) are cytoplasmic. A helical membrane pass occupies residues 280–300 (VGYIALLIIAYGVSVNLVEGV). Residues 301–320 (WKSKVKELYPTKEAYTIYMG) lie on the Extracellular side of the membrane. The helical transmembrane segment at 321–341 (QFQFYQGWVAIAFMLIGSNIL) threads the bilayer. The Cytoplasmic segment spans residues 342–348 (RKVSWLT). The chain crosses the membrane as a helical span at residues 349–369 (AAMITPLMMFITGAAFFSFIF). The Extracellular portion of the chain corresponds to 370–379 (FDSVIAMNLT). A helical transmembrane segment spans residues 380–400 (GILASSPLTLAVMFGMIQNVL). The Cytoplasmic portion of the chain corresponds to 401-438 (SKGVKYSLFDATKNMAYIPLDKDLRVKGQAAVEVIGGR). 436–442 (GGRLGKS) serves as a coordination point for ATP. The chain crosses the membrane as a helical span at residues 439 to 459 (LGKSGGAIIQSTFFILFPAFG). Over 460–465 (FIEATP) the chain is Extracellular. The helical transmembrane segment at 466–486 (YFASIFFIIVILWIFAVKGLN) threads the bilayer. At 487–498 (KEYQVLVNKNEN) the chain is on the cytoplasmic side.

It belongs to the ADP/ATP translocase tlc family.

Its subcellular location is the cell membrane. Provides the rickettsial cell with host ATP in exchange for rickettsial ADP. This is an obligate exchange system. This energy acquiring activity is an important component of rickettsial parasitism. This Rickettsia typhi (strain ATCC VR-144 / Wilmington) protein is ADP,ATP carrier protein 1 (tlcA).